A 239-amino-acid chain; its full sequence is Metallo-beta-lactamase IND-1 (239 aa).

The N-terminal stretch at 1–20 is a signal peptide; it reads MKKSIRFFIVSILLSPFASA. The Zn(2+) site is built by His96, His98, Asp100, His159, and Cys178. Lys181 lines the a beta-lactam pocket. His220 contacts Zn(2+).

It belongs to the metallo-beta-lactamase superfamily. Class-B beta-lactamase family. In terms of assembly, monomer. Zn(2+) serves as cofactor.

It is found in the periplasm. It carries out the reaction a beta-lactam + H2O = a substituted beta-amino acid. With respect to regulation, inhibited by chelating agents such as EDTA. Not susceptible to inactivation by the beta-lactamase-blocking agent clavulanic acid. Its function is as follows. Class B beta-lactamase which confers resistance to the beta-lactam antibiotics, including penicillins, cephalosporins and carbapenems. Acts via hydrolysis of the beta-lactam ring. Has penicillin-, cephalosporin- and carbapenem-hydrolyzing activities. This Chryseobacterium indologenes (Flavobacterium indologenes) protein is Metallo-beta-lactamase IND-1.